Here is a 577-residue protein sequence, read N- to C-terminus: MADALSVYAAALVDGLAQAGVTEAVISPGSRSTPLAMAMAAHPGLRLYMNIDERSAAFFALGLAKAKQRPVALVCTSGTAAANYGPAVVEAYYSRVPLVVLTADRPHELRDVGAPQAIDQLHLYGRYAKWFVDLALPEEADDMLRYARTMAARAVQTAAGAPCGPVHVNAPFREPLVPHIDEAVWERVRSVSRAPQVWRGRPALPQESVSALYEQLSAAERGLIVCGPLDRPGFAEAVTELARALDFPILADPLSQLRAGTHDKTYVLDSYDAILREETAASKLVPDVVLRFGAMPVSKPLFLWLKRHRAIRQIVVDDGGWRDPTLSADSFVQSDEWILCRQLLEWAKPKENKSAWSAIWREMNAIARAALERHLPKEEWFEGNVFTELADLLPAGAALFVGNSMPIRDADTFLFATDKPLRVLANRGANGIDGVVSSALGASVAANPLVLVIGDLSFYHDLNGLLAAKMHSLSATIVLLNNNGGGIFSFLPQARHKGAFETLFGTPTDLSFAHAVEMYGGRHTVPHNWAEFRRHVSESLSSGGLHVIEVRTSRAENVRMHRLLWNEVAREIAKCLE.

The protein belongs to the TPP enzyme family. MenD subfamily. As to quaternary structure, homodimer. Mg(2+) serves as cofactor. It depends on Mn(2+) as a cofactor. Thiamine diphosphate is required as a cofactor.

It carries out the reaction isochorismate + 2-oxoglutarate + H(+) = 5-enolpyruvoyl-6-hydroxy-2-succinyl-cyclohex-3-ene-1-carboxylate + CO2. The protein operates within quinol/quinone metabolism; 1,4-dihydroxy-2-naphthoate biosynthesis; 1,4-dihydroxy-2-naphthoate from chorismate: step 2/7. It functions in the pathway quinol/quinone metabolism; menaquinone biosynthesis. Functionally, catalyzes the thiamine diphosphate-dependent decarboxylation of 2-oxoglutarate and the subsequent addition of the resulting succinic semialdehyde-thiamine pyrophosphate anion to isochorismate to yield 2-succinyl-5-enolpyruvyl-6-hydroxy-3-cyclohexene-1-carboxylate (SEPHCHC). The chain is 2-succinyl-5-enolpyruvyl-6-hydroxy-3-cyclohexene-1-carboxylate synthase from Geobacillus kaustophilus (strain HTA426).